Reading from the N-terminus, the 258-residue chain is Sec-independent protein translocase protein TatC (258 aa).

Topologically, residues 2–23 are cytoplasmic; sequence SVEDTQPLITHLIELRKRLLNC. Residues 24–44 traverse the membrane as a helical segment; the sequence is IIAVIVIFLCLVYFANDIYHL. Over 45 to 75 the chain is Periplasmic; the sequence is VSAPLIKQLPQGSTMIATDVASPFFTPIKLT. The helical transmembrane segment at 76–96 threads the bilayer; the sequence is FMVSLILSAPVILYQVWAFIA. The Cytoplasmic segment spans residues 97–115; it reads PALYKHERRLVVPLLVSSS. A helical membrane pass occupies residues 116-136; that stretch reads LLFYIGMAFAYFVVFPLAFGF. Over 137–156 the chain is Periplasmic; that stretch reads LANTAPEGVQVSTDIASYLS. The chain crosses the membrane as a helical span at residues 157–177; sequence FVMALFMAFGVSFEVPVAIVL. Residues 178–192 are Cytoplasmic-facing; that stretch reads LCWMGITSPEDLRKK. The chain crosses the membrane as a helical span at residues 193–210; sequence RPYVLVGAFVVGMLLTPP. Residue Asp211 is a topological domain, periplasmic. The chain crosses the membrane as a helical span at residues 212–232; it reads VFSQTLLAIPMYCLFEIGVFF. Topologically, residues 233-258 are cytoplasmic; sequence SRFYVGKGRNREEENDAEAESEKTEE.

This sequence belongs to the TatC family. The Tat system comprises two distinct complexes: a TatABC complex, containing multiple copies of TatA, TatB and TatC subunits, and a separate TatA complex, containing only TatA subunits. Substrates initially bind to the TatABC complex, which probably triggers association of the separate TatA complex to form the active translocon. TatC can form a distinct, stable, multimeric complex independent of TatA and TatB. Each of TatA, TatB and TatC are able to interact in pairs without the third partner. Interacts with the signal sequence of DmsA and DmsD.

The protein resides in the cell inner membrane. Its function is as follows. Part of the twin-arginine translocation (Tat) system that transports large folded proteins containing a characteristic twin-arginine motif in their signal peptide across membranes. Together with TatB, TatC is part of a receptor directly interacting with Tat signal peptides. The protein is Sec-independent protein translocase protein TatC of Escherichia coli (strain K12).